The following is a 1373-amino-acid chain: DNA-directed RNA polymerase subunit beta (1373 aa).

This sequence belongs to the RNA polymerase beta chain family. The RNAP catalytic core consists of 2 alpha, 1 beta, 1 beta' and 1 omega subunit. When a sigma factor is associated with the core the holoenzyme is formed, which can initiate transcription.

The catalysed reaction is RNA(n) + a ribonucleoside 5'-triphosphate = RNA(n+1) + diphosphate. Its function is as follows. DNA-dependent RNA polymerase catalyzes the transcription of DNA into RNA using the four ribonucleoside triphosphates as substrates. The polypeptide is DNA-directed RNA polymerase subunit beta (Rickettsia massiliae).